A 377-amino-acid chain; its full sequence is Chaperone protein DnaJ (377 aa).

Positions 5–70 constitute a J domain; it reads DYYEILGVSK…EKRSAYDQYG (66 aa). Residues 131–209 form a CR-type zinc finger; sequence GVVREICVPT…CRGSGRIERT (79 aa). Residues cysteine 144, cysteine 147, cysteine 161, cysteine 164, cysteine 183, cysteine 186, cysteine 197, and cysteine 200 each contribute to the Zn(2+) site. CXXCXGXG motif repeat units lie at residues 144-151, 161-168, 183-190, and 197-204; these read CLQCRGSG, CVTCHGHG, CPSCNGHG, and CNKCRGSG.

It belongs to the DnaJ family. As to quaternary structure, homodimer. Zn(2+) is required as a cofactor.

Its subcellular location is the cytoplasm. Functionally, participates actively in the response to hyperosmotic and heat shock by preventing the aggregation of stress-denatured proteins and by disaggregating proteins, also in an autonomous, DnaK-independent fashion. Unfolded proteins bind initially to DnaJ; upon interaction with the DnaJ-bound protein, DnaK hydrolyzes its bound ATP, resulting in the formation of a stable complex. GrpE releases ADP from DnaK; ATP binding to DnaK triggers the release of the substrate protein, thus completing the reaction cycle. Several rounds of ATP-dependent interactions between DnaJ, DnaK and GrpE are required for fully efficient folding. Also involved, together with DnaK and GrpE, in the DNA replication of plasmids through activation of initiation proteins. This chain is Chaperone protein DnaJ, found in Blochmanniella floridana.